The primary structure comprises 217 residues: Large ribosomal subunit protein bL25 (217 aa).

The segment covering 195-211 (PAEGAAAAPAKGAAKGA) has biased composition (low complexity). Residues 195 to 217 (PAEGAAAAPAKGAAKGAAKGGKK) form a disordered region.

The protein belongs to the bacterial ribosomal protein bL25 family. CTC subfamily. Part of the 50S ribosomal subunit; part of the 5S rRNA/L5/L18/L25 subcomplex. Contacts the 5S rRNA. Binds to the 5S rRNA independently of L5 and L18.

Functionally, this is one of the proteins that binds to the 5S RNA in the ribosome where it forms part of the central protuberance. In Acidiphilium cryptum (strain JF-5), this protein is Large ribosomal subunit protein bL25.